A 202-amino-acid polypeptide reads, in one-letter code: Large ribosomal subunit protein bL9 (202 aa).

The interval 177–202 (AGEFFDPEAEPDDVAEAGGEQTAEEK) is disordered. Residues 181 to 191 (FDPEAEPDDVA) show a composition bias toward acidic residues.

The protein belongs to the bacterial ribosomal protein bL9 family.

In terms of biological role, binds to the 23S rRNA. The protein is Large ribosomal subunit protein bL9 of Nitrobacter hamburgensis (strain DSM 10229 / NCIMB 13809 / X14).